The chain runs to 164 residues: Cytochrome c-type biogenesis protein CcmE (164 aa).

The Cytoplasmic portion of the chain corresponds to 1-8 (MNPRRKSR). Residues 9 to 29 (LYLAVVVLIGIGLTTTLVLYA) form a helical; Signal-anchor for type II membrane protein membrane-spanning segment. At 30–164 (LRSNIDLFYT…NSTAAQGNAS (135 aa)) the chain is on the periplasmic side. Positions 130 and 134 each coordinate heme. The span at 131–150 (DEKYTPPEVKEAMKENHTRP) shows a compositional bias: basic and acidic residues. Residues 131-164 (DEKYTPPEVKEAMKENHTRPAEAYNSTAAQGNAS) are disordered. A compositionally biased stretch (polar residues) spans 154-164 (YNSTAAQGNAS).

It belongs to the CcmE/CycJ family.

The protein localises to the cell inner membrane. Functionally, heme chaperone required for the biogenesis of c-type cytochromes. Transiently binds heme delivered by CcmC and transfers the heme to apo-cytochromes in a process facilitated by CcmF and CcmH. This is Cytochrome c-type biogenesis protein CcmE from Yersinia enterocolitica serotype O:8 / biotype 1B (strain NCTC 13174 / 8081).